The chain runs to 82 residues: Cytochrome b559 subunit alpha (82 aa).

Residues 21-35 (VIHSITIPALFIAGW) traverse the membrane as a helical segment. Histidine 23 is a heme binding site.

It belongs to the PsbE/PsbF family. As to quaternary structure, heterodimer of an alpha subunit and a beta subunit. PSII is composed of 1 copy each of membrane proteins PsbA, PsbB, PsbC, PsbD, PsbE, PsbF, PsbH, PsbI, PsbJ, PsbK, PsbL, PsbM, PsbT, PsbX, PsbY, PsbZ, Psb30/Ycf12, peripheral proteins PsbO, CyanoQ (PsbQ), PsbU, PsbV and a large number of cofactors. It forms dimeric complexes. The cofactor is heme b.

Its subcellular location is the cellular thylakoid membrane. Its function is as follows. This b-type cytochrome is tightly associated with the reaction center of photosystem II (PSII). PSII is a light-driven water:plastoquinone oxidoreductase that uses light energy to abstract electrons from H(2)O, generating O(2) and a proton gradient subsequently used for ATP formation. It consists of a core antenna complex that captures photons, and an electron transfer chain that converts photonic excitation into a charge separation. This Nostoc punctiforme (strain ATCC 29133 / PCC 73102) protein is Cytochrome b559 subunit alpha.